Consider the following 313-residue polypeptide: Heterogeneous nuclear ribonucleoproteins C1/C2 (313 aa).

Position 2 is an N-acetylalanine (Ala2). Residues Lys8, Lys50, Lys89, and Lys94 each participate in a glycyl lysine isopeptide (Lys-Gly) (interchain with G-Cter in SUMO2) cross-link. Residues 16–87 form the RRM domain; the sequence is SRVFIGNLNT…QVLDINLAAE (72 aa). Ser113, Ser115, and Ser121 each carry phosphoserine. 2 disordered regions span residues 139–191 and 219–313; these read YPAR…KLKG and EKEQ…EDDS. The short motif at 155-161 is the Nuclear localization signal element; the sequence is PSKRQRV. Phosphoserine is present on residues Ser162 and Ser166. A compositionally biased stretch (low complexity) spans 175-186; that stretch reads SKSGQRGSSSKS. Residue Lys176 is modified to N6-acetyllysine; alternate. Lys176 participates in a covalent cross-link: Glycyl lysine isopeptide (Lys-Gly) (interchain with G-Cter in SUMO2); alternate. A coiled-coil region spans residues 191-226; the sequence is GDDLQAIKKELTQIKQKVDSLLESLEKIEKEQSKQA. Lys224 is covalently cross-linked (Glycyl lysine isopeptide (Lys-Gly) (interchain with G-Cter in SUMO2)). 3 positions are modified to phosphoserine: Ser229, Ser231, and Ser232. A Glycyl lysine isopeptide (Lys-Gly) (interchain with G-Cter in SUMO2) cross-link involves residue Lys237. Lys240 participates in a covalent cross-link: Glycyl lysine isopeptide (Lys-Gly) (interchain with G-Cter in SUMO2); alternate. Residue Lys240 forms a Glycyl lysine isopeptide (Lys-Gly) (interchain with G-Cter in SUMO1); alternate linkage. A phosphoserine mark is found at Ser241, Ser246, Ser247, and Ser249. Positions 250 to 261 are enriched in basic and acidic residues; that stretch reads VKKDETNVKMES. Residues Lys251 and Lys252 each participate in a glycyl lysine isopeptide (Lys-Gly) (interchain with G-Cter in SUMO2) cross-link. Lys258 is covalently cross-linked (Glycyl lysine isopeptide (Lys-Gly) (interchain with G-Cter in SUMO2); alternate). Lys258 participates in a covalent cross-link: Glycyl lysine isopeptide (Lys-Gly) (interchain with G-Cter in SUMO); alternate. Residues Ser261 and Ser268 each carry the phosphoserine modification. Residues 263 to 284 show a composition bias toward acidic residues; that stretch reads AGADDSAEEGDLLDDDDNEDRG. Positions 285-294 are enriched in basic and acidic residues; the sequence is DDQLELKDDE. The span at 295–313 shows a compositional bias: acidic residues; the sequence is KEPEEGEDDRDSANGEDDS. Residues Ser306 and Ser313 each carry the phosphoserine modification.

The protein belongs to the RRM HNRPC family. RALY subfamily. As to quaternary structure, tetramer composed of 3 copies of isoform C1 and 1 copy of isoform C2. Assembly of 3 tetramers with bound pre-mRNA gives rise to a 19S complex that interacts with HNRNPA2B1 tetramers. Component of the 40S hnRNP particle. Identified in the spliceosome C complex. Interacts with IGF2BP1. Interacts with DHX9; this interaction is direct, enhanced probably by their concomitant binding to RNA and mediates the attachment to actin filaments. Interacts with PPIA/CYPA. Post-translationally, phosphorylated on Ser-268 and Ser-306 in resting cells. Sumoylated. Sumoylation reduces affinity for mRNA. In terms of processing, ubiquitinated and degraded after nucleo-cytoplasmic transport by YWHAE.

Its subcellular location is the nucleus. Its function is as follows. Binds pre-mRNA and nucleates the assembly of 40S hnRNP particles. Interacts with poly-U tracts in the 3'-UTR or 5'-UTR of mRNA and modulates the stability and the level of translation of bound mRNA molecules. Single HNRNPC tetramers bind 230-240 nucleotides. Trimers of HNRNPC tetramers bind 700 nucleotides. May play a role in the early steps of spliceosome assembly and pre-mRNA splicing. N6-methyladenosine (m6A) has been shown to alter the local structure in mRNAs and long non-coding RNAs (lncRNAs) via a mechanism named 'm(6)A-switch', facilitating binding of HNRNPC, leading to regulation of mRNA splicing. The sequence is that of Heterogeneous nuclear ribonucleoproteins C1/C2 (Hnrnpc) from Mus musculus (Mouse).